Reading from the N-terminus, the 48-residue chain is Delta-stichotoxin-Hmg4a (48 aa).

3 cysteine pairs are disulfide-bonded: Cys3–Cys43, Cys5–Cys33, and Cys26–Cys44.

Belongs to the sea anemone sodium channel inhibitory toxin family. Type II subfamily.

The protein localises to the secreted. Its subcellular location is the nematocyst. In terms of biological role, binds specifically to voltage-gated sodium channels (Nav), thereby delaying their inactivation during signal transduction. Its toxicity is weaker than that of RpIII (AC P08380). This Heteractis magnifica (Magnificent sea anemone) protein is Delta-stichotoxin-Hmg4a.